The following is a 341-amino-acid chain: Uroporphyrinogen decarboxylase (341 aa).

Substrate contacts are provided by residues 25–29, Phe44, Asp74, Tyr151, Ser206, and His318; that span reads RQAGR.

The protein belongs to the uroporphyrinogen decarboxylase family. Homodimer.

The protein resides in the cytoplasm. It carries out the reaction uroporphyrinogen III + 4 H(+) = coproporphyrinogen III + 4 CO2. The protein operates within porphyrin-containing compound metabolism; protoporphyrin-IX biosynthesis; coproporphyrinogen-III from 5-aminolevulinate: step 4/4. Its function is as follows. Catalyzes the decarboxylation of four acetate groups of uroporphyrinogen-III to yield coproporphyrinogen-III. The sequence is that of Uroporphyrinogen decarboxylase from Christiangramia forsetii (strain DSM 17595 / CGMCC 1.15422 / KT0803) (Gramella forsetii).